The primary structure comprises 126 residues: Large ribosomal subunit protein bL17c (126 aa).

Residues M1–A10 constitute a chloroplast transit peptide.

In terms of assembly, component of the chloroplast large ribosomal subunit (LSU). Mature 70S chloroplast ribosomes of higher plants consist of a small (30S) and a large (50S) subunit. The 30S small subunit contains 1 molecule of ribosomal RNA (16S rRNA) and 24 different proteins. The 50S large subunit contains 3 rRNA molecules (23S, 5S and 4.5S rRNA) and 33 different proteins.

Its subcellular location is the plastid. The protein localises to the chloroplast. Functionally, component of the chloroplast ribosome (chloro-ribosome), a dedicated translation machinery responsible for the synthesis of chloroplast genome-encoded proteins, including proteins of the transcription and translation machinery and components of the photosynthetic apparatus. The chain is Large ribosomal subunit protein bL17c (RPL17) from Spinacia oleracea (Spinach).